A 138-amino-acid polypeptide reads, in one-letter code: Transcription antitermination protein NusB (138 aa).

It belongs to the NusB family.

In terms of biological role, involved in transcription antitermination. Required for transcription of ribosomal RNA (rRNA) genes. Binds specifically to the boxA antiterminator sequence of the ribosomal RNA (rrn) operons. The sequence is that of Transcription antitermination protein NusB from Alkaliphilus oremlandii (strain OhILAs) (Clostridium oremlandii (strain OhILAs)).